Reading from the N-terminus, the 143-residue chain is Large ribosomal subunit protein uL11 (143 aa).

It belongs to the universal ribosomal protein uL11 family. In terms of assembly, part of the ribosomal stalk of the 50S ribosomal subunit. Interacts with L10 and the large rRNA to form the base of the stalk. L10 forms an elongated spine to which L12 dimers bind in a sequential fashion forming a multimeric L10(L12)X complex. Post-translationally, one or more lysine residues are methylated.

Forms part of the ribosomal stalk which helps the ribosome interact with GTP-bound translation factors. This Pseudomonas savastanoi pv. phaseolicola (strain 1448A / Race 6) (Pseudomonas syringae pv. phaseolicola (strain 1448A / Race 6)) protein is Large ribosomal subunit protein uL11.